Consider the following 328-residue polypeptide: DNA-directed RNA polymerase subunit alpha (328 aa).

Residues 1–244 (MEKFLKYEIK…EHLNPIVSVN (244 aa)) form an alpha N-terminal domain (alpha-NTD) region. The alpha C-terminal domain (alpha-CTD) stretch occupies residues 261–328 (KVKSFAKQIE…VQELGLKFRS (68 aa)).

The protein belongs to the RNA polymerase alpha chain family. As to quaternary structure, homodimer. The RNAP catalytic core consists of 2 alpha, 1 beta, 1 beta' and 1 omega subunit. When a sigma factor is associated with the core the holoenzyme is formed, which can initiate transcription.

The enzyme catalyses RNA(n) + a ribonucleoside 5'-triphosphate = RNA(n+1) + diphosphate. Its function is as follows. DNA-dependent RNA polymerase catalyzes the transcription of DNA into RNA using the four ribonucleoside triphosphates as substrates. The polypeptide is DNA-directed RNA polymerase subunit alpha (Mycoplasma genitalium (strain ATCC 33530 / DSM 19775 / NCTC 10195 / G37) (Mycoplasmoides genitalium)).